Consider the following 206-residue polypeptide: FMN-dependent NADH:quinone oxidoreductase (206 aa).

Residues Ser-10, 16–18 (SSS), 93–96 (MYNF), and 137–140 (TRGG) contribute to the FMN site.

The protein belongs to the azoreductase type 1 family. In terms of assembly, homodimer. FMN is required as a cofactor.

The catalysed reaction is 2 a quinone + NADH + H(+) = 2 a 1,4-benzosemiquinone + NAD(+). It catalyses the reaction N,N-dimethyl-1,4-phenylenediamine + anthranilate + 2 NAD(+) = 2-(4-dimethylaminophenyl)diazenylbenzoate + 2 NADH + 2 H(+). Quinone reductase that provides resistance to thiol-specific stress caused by electrophilic quinones. Its function is as follows. Also exhibits azoreductase activity. Catalyzes the reductive cleavage of the azo bond in aromatic azo compounds to the corresponding amines. This Psychromonas ingrahamii (strain DSM 17664 / CCUG 51855 / 37) protein is FMN-dependent NADH:quinone oxidoreductase.